Here is a 568-residue protein sequence, read N- to C-terminus: Urease subunit alpha (568 aa).

Ni(2+) contacts are provided by His-134, His-136, and Lys-217. N6-carboxylysine is present on Lys-217. Substrate is bound at residue His-219. Ni(2+) contacts are provided by His-246 and His-272. Catalysis depends on His-320, which acts as the Proton donor. Asp-360 contributes to the Ni(2+) binding site.

Belongs to the metallo-dependent hydrolases superfamily. Urease alpha subunit family. In terms of assembly, heterotrimer of UreA (gamma), UreB (beta) and UreC (alpha) subunits. Three heterotrimers associate to form the active enzyme. It depends on Ni cation as a cofactor. Carboxylation allows a single lysine to coordinate two nickel ions.

The protein resides in the cytoplasm. It catalyses the reaction urea + 2 H2O + H(+) = hydrogencarbonate + 2 NH4(+). It participates in nitrogen metabolism; urea degradation; CO(2) and NH(3) from urea (urease route): step 1/1. This Marinomonas sp. (strain MWYL1) protein is Urease subunit alpha.